The primary structure comprises 105 residues: Cell division protein FtsB (105 aa).

Topologically, residues 1–3 (MRL) are cytoplasmic. The chain crosses the membrane as a helical span at residues 4–21 (FTLILMVVLALVQRQLWF). The Periplasmic segment spans residues 22 to 105 (GKNGLVEYRQ…NKQSSLPKSD (84 aa)). Residues 28 to 74 (EYRQVSENLLRRQADNQKLQERNMLLKEDIEDLKSGLEAIEELARND) adopt a coiled-coil conformation.

It belongs to the FtsB family. Part of a complex composed of FtsB, FtsL and FtsQ.

The protein resides in the cell inner membrane. Functionally, essential cell division protein. May link together the upstream cell division proteins, which are predominantly cytoplasmic, with the downstream cell division proteins, which are predominantly periplasmic. In Tolumonas auensis (strain DSM 9187 / NBRC 110442 / TA 4), this protein is Cell division protein FtsB.